A 226-amino-acid chain; its full sequence is tRNA (guanine-N(7)-)-methyltransferase (226 aa).

S-adenosyl-L-methionine is bound by residues E59, E84, D111, and D134. The active site involves D134. Residue K138 participates in substrate binding. Residues 140–145 (RHNKRR) are interaction with RNA. Substrate contacts are provided by residues D170 and 205–208 (TKFE).

This sequence belongs to the class I-like SAM-binding methyltransferase superfamily. TrmB family.

The catalysed reaction is guanosine(46) in tRNA + S-adenosyl-L-methionine = N(7)-methylguanosine(46) in tRNA + S-adenosyl-L-homocysteine. The protein operates within tRNA modification; N(7)-methylguanine-tRNA biosynthesis. Its function is as follows. Catalyzes the formation of N(7)-methylguanine at position 46 (m7G46) in tRNA. This Chromobacterium violaceum (strain ATCC 12472 / DSM 30191 / JCM 1249 / CCUG 213 / NBRC 12614 / NCIMB 9131 / NCTC 9757 / MK) protein is tRNA (guanine-N(7)-)-methyltransferase.